Reading from the N-terminus, the 279-residue chain is Orotidine 5'-phosphate decarboxylase (279 aa).

Substrate-binding positions include Asp-8, Lys-30, 58–67 (DLKIHDIPNT), Thr-117, Arg-177, Gln-186, Gly-206, and Arg-207. Lys-60 (proton donor) is an active-site residue.

The protein belongs to the OMP decarboxylase family. Type 1 subfamily. Homodimer.

The enzyme catalyses orotidine 5'-phosphate + H(+) = UMP + CO2. It functions in the pathway pyrimidine metabolism; UMP biosynthesis via de novo pathway; UMP from orotate: step 2/2. Functionally, catalyzes the decarboxylation of orotidine 5'-monophosphate (OMP) to uridine 5'-monophosphate (UMP). This Campylobacter jejuni (strain RM1221) protein is Orotidine 5'-phosphate decarboxylase.